The chain runs to 840 residues: Protein translocase subunit SecA (840 aa).

Residues Gln-87, 105-109 (GEGKT), and Asp-494 each bind ATP. The disordered stretch occupies residues 518-537 (RRIDNQLRGRSGRQGDPGSS). Residues Cys-826, Cys-828, Cys-837, and Cys-838 each coordinate Zn(2+).

This sequence belongs to the SecA family. In terms of assembly, monomer and homodimer. Part of the essential Sec protein translocation apparatus which comprises SecA, SecYEG and auxiliary proteins SecDF-YajC and YidC. It depends on Zn(2+) as a cofactor.

The protein resides in the cell inner membrane. Its subcellular location is the cytoplasm. It carries out the reaction ATP + H2O + cellular proteinSide 1 = ADP + phosphate + cellular proteinSide 2.. Functionally, part of the Sec protein translocase complex. Interacts with the SecYEG preprotein conducting channel. Has a central role in coupling the hydrolysis of ATP to the transfer of proteins into and across the cell membrane, serving as an ATP-driven molecular motor driving the stepwise translocation of polypeptide chains across the membrane. The sequence is that of Protein translocase subunit SecA from Desulforapulum autotrophicum (strain ATCC 43914 / DSM 3382 / VKM B-1955 / HRM2) (Desulfobacterium autotrophicum).